The sequence spans 209 residues: MDQQKIPQATAKRLPLYYRFIQNLSLSGKQRVSSAELSEAVKVDSATIRRDFSYFGALGKKGYGYNVNYLLSFFRETLDQDDITRVALIGVGNLGTAFLHYNFTKNNNTKIEMAFDVDEEKVGKEIGGIPVYHLDELEERLTNDIQVAILTVPANVAQAVADRLAYTSVHGILNFTPARLNVSEKIRIHHIDLAVELQTLVYFLKNYPQ.

The segment at residues 16–55 is a DNA-binding region (H-T-H motif); the sequence is LYYRFIQNLSLSGKQRVSSAELSEAVKVDSATIRRDFSYF. Residue 90–95 coordinates NAD(+); sequence GVGNLG.

This sequence belongs to the transcriptional regulatory Rex family. In terms of assembly, homodimer.

The protein localises to the cytoplasm. Its function is as follows. Modulates transcription in response to changes in cellular NADH/NAD(+) redox state. The protein is Redox-sensing transcriptional repressor Rex of Bacillus cytotoxicus (strain DSM 22905 / CIP 110041 / 391-98 / NVH 391-98).